The chain runs to 465 residues: Oxidation resistance protein 1 (465 aa).

4 disordered regions span residues 1–61 (MPHH…RASN), 73–119 (EHRR…PPSI), 144–183 (QKMQ…HSRL), and 202–223 (THPT…PQIR). The span at 20–32 (APASSIQTSSLSQ) shows a compositional bias: polar residues. The span at 103–113 (RLSTFSSSTSP) shows a compositional bias: low complexity. Positions 148–162 (GHGERGASKRSDKMQ) are enriched in basic and acidic residues. 2 stretches are compositionally biased toward polar residues: residues 165–179 (GQAS…SSPP) and 202–218 (THPT…NGQP). One can recognise a TLDc domain in the interval 287-465 (NVLTPEDAIG…CLGLEVWSTL (179 aa)).

This sequence belongs to the OXR1 family.

The protein resides in the mitochondrion. May be involved in protection from oxidative damage. This Cryptococcus neoformans var. neoformans serotype D (strain JEC21 / ATCC MYA-565) (Filobasidiella neoformans) protein is Oxidation resistance protein 1 (OXR1).